The following is a 765-amino-acid chain: 5-methyltetrahydropteroyltriglutamate--homocysteine methyltransferase (765 aa).

Residues 16 to 19 (RELK) and lysine 121 contribute to the 5-methyltetrahydropteroyltri-L-glutamate site. Residues 441 to 443 (IGS) and glutamate 494 contribute to the L-homocysteine site. Residues 441–443 (IGS) and glutamate 494 each bind L-methionine. Residues 525-526 (RC) and tryptophan 571 contribute to the 5-methyltetrahydropteroyltri-L-glutamate site. L-homocysteine is bound at residue aspartate 609. Aspartate 609 contacts L-methionine. Glutamate 615 lines the 5-methyltetrahydropteroyltri-L-glutamate pocket. Histidine 651, cysteine 653, and glutamate 675 together coordinate Zn(2+). Histidine 704 acts as the Proton donor in catalysis. Cysteine 736 serves as a coordination point for Zn(2+).

The protein belongs to the vitamin-B12 independent methionine synthase family. It depends on Zn(2+) as a cofactor.

It carries out the reaction 5-methyltetrahydropteroyltri-L-glutamate + L-homocysteine = tetrahydropteroyltri-L-glutamate + L-methionine. The protein operates within amino-acid biosynthesis; L-methionine biosynthesis via de novo pathway; L-methionine from L-homocysteine (MetE route): step 1/1. In terms of biological role, catalyzes the transfer of a methyl group from 5-methyltetrahydrofolate to homocysteine resulting in methionine formation. This Saccharophagus degradans (strain 2-40 / ATCC 43961 / DSM 17024) protein is 5-methyltetrahydropteroyltriglutamate--homocysteine methyltransferase.